The chain runs to 267 residues: Probable beta-lactamase YbxI (267 aa).

Positions 1–23 (MKKWIYVVLVLSIAGIGGFSVHA) are cleaved as a signal peptide. Catalysis depends on Ser76, which acts as the Acyl-ester intermediate. Lys79 is modified (N6-carboxylysine). Residue 214 to 216 (KTG) participates in substrate binding.

It belongs to the class-D beta-lactamase family.

The enzyme catalyses a beta-lactam + H2O = a substituted beta-amino acid. The sequence is that of Probable beta-lactamase YbxI (ybxI) from Bacillus subtilis (strain 168).